The chain runs to 378 residues: 3-hydroxyisobutyryl-CoA hydrolase 1 (378 aa).

The residue at position 2 (alanine 2) is an N-acetylalanine. Residues glutamate 94, glycine 119, glutamate 142, and aspartate 150 each contribute to the substrate site.

It belongs to the enoyl-CoA hydratase/isomerase family. As to expression, expressed in roots, leaves, flowers and siliques.

The protein resides in the peroxisome. It carries out the reaction 3-hydroxy-2-methylpropanoyl-CoA + H2O = 3-hydroxy-2-methylpropanoate + CoA + H(+). It participates in amino-acid degradation; L-valine degradation. Inhibited by copper. In terms of biological role, involved in valine catabolism. May be indirectly involved in benzoic acid biosynthesis and in cold signaling and cold tolerance. The sequence is that of 3-hydroxyisobutyryl-CoA hydrolase 1 (CHY1) from Arabidopsis thaliana (Mouse-ear cress).